The sequence spans 354 residues: MEKNWFFPPHDGIRLGDLADQIGAELLDATAADRAVRAVAPVYRAKAGDVCYMLSRKSREELQTCSATAIICDKAISSLVPDTIPVLLTAKPHTAFALAGTLLHERAMRPSYNTSERGVSPGAFVDSTARLEAGVEVEPMAVIGAGAEIGSGTRIAAGAMIGPGVRIGRDCTISAGVSILCALIGNNVIIHPGTRIGQDGFGYAPGPTGGMIKIVQVGRVIIQDHVEIGANTTIDRGTMDDTVIGEGTKIDNLVQIGHNVRIGRYCGIVSQVGIAGSAQIGDGVMIGGGVGVNGHTSIGSGAQIAAMSGVASDVPAGERYGGIPARPMRDFLRDVAEMALRSSERQKKKGGKDE.

Catalysis depends on histidine 258, which acts as the Proton acceptor.

This sequence belongs to the transferase hexapeptide repeat family. LpxD subfamily. In terms of assembly, homotrimer.

It carries out the reaction a UDP-3-O-[(3R)-3-hydroxyacyl]-alpha-D-glucosamine + a (3R)-hydroxyacyl-[ACP] = a UDP-2-N,3-O-bis[(3R)-3-hydroxyacyl]-alpha-D-glucosamine + holo-[ACP] + H(+). It participates in bacterial outer membrane biogenesis; LPS lipid A biosynthesis. Catalyzes the N-acylation of UDP-3-O-acylglucosamine using 3-hydroxyacyl-ACP as the acyl donor. Is involved in the biosynthesis of lipid A, a phosphorylated glycolipid that anchors the lipopolysaccharide to the outer membrane of the cell. The sequence is that of UDP-3-O-acylglucosamine N-acyltransferase from Sinorhizobium medicae (strain WSM419) (Ensifer medicae).